We begin with the raw amino-acid sequence, 289 residues long: ATP synthase subunit a (289 aa).

A run of 6 helical transmembrane segments spans residues 43 to 63 (AFHL…LLIF), 103 to 123 (VIAP…AVDL), 160 to 180 (FCVF…GGFI), 193 to 213 (IFVQ…TLIA), 232 to 252 (VFIL…GLGV), and 259 to 279 (AVFH…LTIV).

The protein belongs to the ATPase A chain family. In terms of assembly, F-type ATPases have 2 components, CF(1) - the catalytic core - and CF(0) - the membrane proton channel. CF(1) has five subunits: alpha(3), beta(3), gamma(1), delta(1), epsilon(1). CF(0) has three main subunits: a(1), b(2) and c(9-12). The alpha and beta chains form an alternating ring which encloses part of the gamma chain. CF(1) is attached to CF(0) by a central stalk formed by the gamma and epsilon chains, while a peripheral stalk is formed by the delta and b chains.

The protein resides in the cell inner membrane. In terms of biological role, key component of the proton channel; it plays a direct role in the translocation of protons across the membrane. The sequence is that of ATP synthase subunit a from Pseudomonas putida (strain ATCC 700007 / DSM 6899 / JCM 31910 / BCRC 17059 / LMG 24140 / F1).